We begin with the raw amino-acid sequence, 313 residues long: UDP-N-acetylglucosamine 3-dehydrogenase (313 aa).

H13, L14, and R38 together coordinate NAD(+).

This sequence belongs to the Gfo/Idh/MocA family. As to quaternary structure, exists in multiple oligomeric states.

It carries out the reaction UDP-N-acetyl-alpha-D-glucosamine + NAD(+) = UDP-2-acetamido-3-dehydro-2-deoxy-alpha-D-glucopyranose + NADH + H(+). It functions in the pathway bacterial outer membrane biogenesis; LPS lipid A biosynthesis. In terms of biological role, oxidoreductase involved in the synthesis of 2,3-diamino-2,3-dideoxy-D-glucopyranose (GlcN3N), which is a component of lipid A in some species. Catalyzes the NAD(+)-dependent oxidation of the glucosamine 3-position of UDP-N-acetyl-glucosamine (UDP-GlcNAc) to a ketone moiety, forming UDP-2-acetamido-3-dehydro-2-deoxy-alpha-D-glucopyranose (UDP-3-oxo-GlcNAc). Is specific for UDP-GlcNAc, no activity is observed with UDP-glucose (UDP-Glc), UDP-glucoronic acid (UDP-GlcA), UDP-galactose (UDP-Gal) and UDP-N-acetylgalactosamine (UDP-GalNAc). Cannot use FAD(+) and NADP(+). The sequence is that of UDP-N-acetylglucosamine 3-dehydrogenase from Acidithiobacillus ferrooxidans (strain ATCC 23270 / DSM 14882 / CIP 104768 / NCIMB 8455) (Ferrobacillus ferrooxidans (strain ATCC 23270)).